A 950-amino-acid polypeptide reads, in one-letter code: Protocadherin alpha-3 (950 aa).

The N-terminal stretch at 1–29 (MLFSWREDPGAQCLLLSLLLLAASEVGSG) is a signal peptide. 6 Cadherin domains span residues 30-133 (QLHY…APVF), 134-242 (PMSV…APAF), 243-350 (ERTI…VPEL), 351-455 (VIHS…APAF), 456-565 (SQSE…APAL), and 581-678 (VPRS…APKA). Over 30 to 697 (QLHYSVSEEA…GPEAALVDVN (668 aa)) the chain is Extracellular. Asn-257 and Asn-265 each carry an N-linked (GlcNAc...) asparagine glycan. The N-linked (GlcNAc...) asparagine glycan is linked to Asn-548. Residues 698-718 (VYLIVAICAVSSLLVLTLLLY) traverse the membrane as a helical segment. Residues 719-950 (TALRCSAPPT…GNSTTDNSDQ (232 aa)) lie on the Cytoplasmic side of the membrane. 2 PXXP repeats span residues 734–737 (PGKP) and 774–777 (PSLP). The 6 X 4 AA repeats of P-X-X-P stretch occupies residues 734 to 894 (PGKPTLVCSS…PDKFIIPGSP (161 aa)). 3 disordered regions span residues 777 to 806 (PPCP…NPDW), 831 to 856 (GPGG…EVSP), and 869 to 889 (FKYG…DKFI). Over residues 782–797 (SRDREEKQDVDVDLSA) the composition is skewed to basic and acidic residues. 4 PXXP repeats span residues 799-802 (PRQP), 832-835 (PGGP), 873-876 (PGNP), and 891-894 (PGSP). The tract at residues 901 to 950 (QEPANSQIDKSDFITFGKKEETKKKKKKKKGNKTQEKKEKGNSTTDNSDQ) is disordered. Over residues 909-923 (DKSDFITFGKKEETK) the composition is skewed to basic and acidic residues.

Its subcellular location is the cell membrane. In terms of biological role, potential calcium-dependent cell-adhesion protein. May be involved in the establishment and maintenance of specific neuronal connections in the brain. The polypeptide is Protocadherin alpha-3 (PCDHA3) (Pan troglodytes (Chimpanzee)).